The sequence spans 315 residues: Solute carrier family 25 member 32 (315 aa).

Solcar repeat units follow at residues 20–109 (HVRY…IKSY), 118–209 (LEAT…LKLK), and 222–306 (LSTV…VSHF). 6 helical membrane passes run 26-43 (LVAG…LHPL), 89-106 (VWGA…YNAI), 123-143 (YLVS…PLWV), 186-203 (FVPG…FMAY), 227-243 (YISV…AATY), and 281-300 (GIAP…FVVY).

This sequence belongs to the mitochondrial carrier (TC 2.A.29) family.

It localises to the mitochondrion inner membrane. It carries out the reaction FAD(in) = FAD(out). Functionally, facilitates flavin adenine dinucleotide (FAD) translocation across the mitochondrial inner membrane into the mitochondrial matrix where it acts as a redox cofactor to assist flavoenzyme activities in fundamental metabolic processes including fatty acid beta-oxidation, amino acid and choline metabolism as well as mitochondrial electron transportation. In particular, provides FAD to DLD dehydrogenase of the glycine cleavage system, part of mitochondrial one-carbon metabolic pathway involved in neural tube closure in early embryogenesis. The polypeptide is Solute carrier family 25 member 32 (Macaca fascicularis (Crab-eating macaque)).